Here is a 156-residue protein sequence, read N- to C-terminus: Snaclec A1 (156 aa).

A signal peptide spans 1–23; that stretch reads MGRSISVSFGLLVVFLSLSGTGA. Disulfide bonds link cysteine 27/cysteine 38, cysteine 55/cysteine 154, and cysteine 129/cysteine 146. A C-type lectin domain is found at 34–155; it reads HEGHCYKVFN…CGQPYRFTCE (122 aa).

Belongs to the snaclec family. As to quaternary structure, heterodimer; disulfide-linked. In terms of tissue distribution, expressed by the venom gland.

Its subcellular location is the secreted. Its function is as follows. Interferes with one step of hemostasis (modulation of platelet aggregation, or coagulation cascade, for example). The sequence is that of Snaclec A1 from Macrovipera lebetinus (Levantine viper).